The primary structure comprises 147 residues: MAPCPQPESCPAGSPLGLICLSLLLIPASAGTYCECSLGLSREALIALIVVLAGVSASCFCALVVVAIGVFRAKGDTCPGHSENRLVGPYGVQEDRIDLHTVHVESHLMDPDLDVSMMPSLDGPGLMTMTAPLEPPPPPPPPPPLPQ.

The signal sequence occupies residues 1–31; the sequence is MAPCPQPESCPAGSPLGLICLSLLLIPASAG. At 32-47 the chain is on the extracellular side; sequence TYCECSLGLSREALIA. The chain crosses the membrane as a helical span at residues 48–68; that stretch reads LIVVLAGVSASCFCALVVVAI. Residues 69–147 lie on the Cytoplasmic side of the membrane; that stretch reads GVFRAKGDTC…PPPPPPPLPQ (79 aa). Residues 128-147 are disordered; sequence TMTAPLEPPPPPPPPPPLPQ. Pro residues predominate over residues 133 to 147; that stretch reads LEPPPPPPPPPPLPQ.

The protein resides in the membrane. It is found in the cytoplasmic vesicle. It localises to the secretory vesicle. The protein localises to the acrosome. The protein is Transmembrane protein 210 (Tmem210) of Mus musculus (Mouse).